A 267-amino-acid polypeptide reads, in one-letter code: 5'-methylthioadenosine nucleosidase (267 aa).

The active-site Proton acceptor is glutamate 38. Residues threonine 116, lysine 199 to glutamate 202, and aspartate 225 contribute to the S-methyl-5'-thioadenosine site. Adenine contacts are provided by lysine 199 and aspartate 225. The active-site Proton donor is aspartate 225.

The protein belongs to the PNP/UDP phosphorylase family. MtnN subfamily. In terms of assembly, homodimer. Interacts with CBL3 in a calcium-dependent manner. As to expression, expressed in roots, leaves, stems, cauline leaves and flowers.

The catalysed reaction is S-methyl-5'-thioadenosine + H2O = 5-(methylsulfanyl)-D-ribose + adenine. Its pathway is amino-acid biosynthesis; L-methionine biosynthesis via salvage pathway; S-methyl-5-thio-alpha-D-ribose 1-phosphate from S-methyl-5'-thioadenosine (hydrolase route): step 1/2. With respect to regulation, inhibited by CBL3 in a calcium-dependent manner. Inhibited by 5'-methylthiotubercidin (MTT) and by formycin A (FMA). Its function is as follows. Enzyme of the methionine cycle that catalyzes the irreversible cleavage of the glycosidic bond in 5'-methylthioadenosine (MTA) to adenine and 5'-methylthioribose. Contributes to the maintenance of AdoMet homeostasis and is required to sustain high rates of ethylene synthesis. Inactive towards S-adenosylhomocysteine (SAH/AdoHcy). The protein is 5'-methylthioadenosine nucleosidase (MTN1) of Arabidopsis thaliana (Mouse-ear cress).